The following is a 715-amino-acid chain: ATP-dependent DNA helicase Hel308 (715 aa).

Positions 1 to 29 (MKVGELNVSEKIKEILRERGIEELYPPQA) match the Q motif motif. ATP-binding positions include Gln28 and 46 to 53 (IPTASGKT). Residues 33-197 (TSGVLEGENL…WLNAKLIRSD (165 aa)) form the Helicase ATP-binding domain. Residues 145 to 148 (DEIH) carry the DEAH box motif. Residues 226–422 (WEELVYDAVK…ILRSQILALI (197 aa)) form the Helicase C-terminal domain.

Belongs to the helicase family. Hel308 subfamily. Monomer.

It catalyses the reaction Couples ATP hydrolysis with the unwinding of duplex DNA by translocating in the 3'-5' direction.. The catalysed reaction is ATP + H2O = ADP + phosphate + H(+). Functionally, DNA-dependent ATPase and 3'-5' DNA helicase that may be involved in repair of stalled replication forks. In terms of biological role, rapidly unwinds double-stranded (ds)DNA with a 3'-overhang, has no strand reannealing capabilities. Binds single-stranded (ss)DNA, dsDNA with a 3'-overhang and ssRNA. The sequence is that of ATP-dependent DNA helicase Hel308 from Pyrococcus abyssi (strain GE5 / Orsay).